Consider the following 427-residue polypeptide: 3-phosphoshikimate 1-carboxyvinyltransferase (427 aa).

3-phosphoshikimate-binding residues include lysine 20, serine 21, and arginine 25. Position 20 (lysine 20) interacts with phosphoenolpyruvate. Glycine 92 and arginine 120 together coordinate phosphoenolpyruvate. 3-phosphoshikimate-binding residues include serine 166, glutamine 168, aspartate 312, and lysine 339. Glutamine 168 is a binding site for phosphoenolpyruvate. Aspartate 312 (proton acceptor) is an active-site residue. Arginine 343 and arginine 385 together coordinate phosphoenolpyruvate.

The protein belongs to the EPSP synthase family. Monomer.

The protein resides in the cytoplasm. The enzyme catalyses 3-phosphoshikimate + phosphoenolpyruvate = 5-O-(1-carboxyvinyl)-3-phosphoshikimate + phosphate. Its pathway is metabolic intermediate biosynthesis; chorismate biosynthesis; chorismate from D-erythrose 4-phosphate and phosphoenolpyruvate: step 6/7. In terms of biological role, catalyzes the transfer of the enolpyruvyl moiety of phosphoenolpyruvate (PEP) to the 5-hydroxyl of shikimate-3-phosphate (S3P) to produce enolpyruvyl shikimate-3-phosphate and inorganic phosphate. The sequence is that of 3-phosphoshikimate 1-carboxyvinyltransferase from Streptococcus agalactiae serotype III (strain NEM316).